The chain runs to 937 residues: Outer membrane usher protein CS3-2 (937 aa).

This sequence belongs to the fimbrial export usher family. In terms of processing, a 97 kDa form of the protein is thought to be due to post-translational processing of isoform 104 kDa.

The protein resides in the cell outer membrane. These proteins are essential for the biogenesis of mature CS3 pili, but not for synthesis of the CS3 pilin subunit. The sequence is that of Outer membrane usher protein CS3-2 from Escherichia coli.